The chain runs to 77 residues: Acyl carrier protein (77 aa).

The 76-residue stretch at 1 to 76 (MENFDKVKDI…DAVKFINSIE (76 aa)) folds into the Carrier domain. Serine 36 carries the O-(pantetheine 4'-phosphoryl)serine modification.

The protein belongs to the acyl carrier protein (ACP) family. Post-translationally, 4'-phosphopantetheine is transferred from CoA to a specific serine of apo-ACP by AcpS. This modification is essential for activity because fatty acids are bound in thioester linkage to the sulfhydryl of the prosthetic group.

The protein localises to the cytoplasm. The protein operates within lipid metabolism; fatty acid biosynthesis. Functionally, carrier of the growing fatty acid chain in fatty acid biosynthesis. The polypeptide is Acyl carrier protein (Staphylococcus saprophyticus subsp. saprophyticus (strain ATCC 15305 / DSM 20229 / NCIMB 8711 / NCTC 7292 / S-41)).